We begin with the raw amino-acid sequence, 733 residues long: Centrosomal protein of 68 kDa (733 aa).

Residues 71–80 (SKEPVADRSK) show a composition bias toward basic and acidic residues. Disordered regions lie at residues 71–92 (SKEPVADRSKPPLRGPLPSASV), 150–207 (GLSQ…SFAN), and 222–244 (VVGAGPPLQGSAQPLTSGSDATG). Residues 178 to 190 (SSRSISASSVGSS) are compositionally biased toward low complexity. The segment covering 231 to 241 (GSAQPLTSGSD) has biased composition (polar residues). Serine 315 is modified (phosphoserine). The interval 420-442 (PQLKTKEKEPPFPRQKRGRQHVS) is disordered. Phosphoserine is present on residues serine 453 and serine 459. The segment at 497-571 (HSSLQVSDSD…KPLKTQPASK (75 aa)) is disordered. The span at 540–569 (IQPQDSRGKSSLMSNQTLGVSSKPLKTQPA) shows a compositional bias: polar residues.

As to quaternary structure, interacts with CNTLN; the interaction recruits CEP68 to the centrosome. Interacts with the SCF(FBXW11) complex which contains SKP1, CUL1 and FBXW11; the interaction is probably mediated by FBXW11 and the complex also contains CDK5RAP2 and PCNT. Also interacts with F-box protein BTRC. Interacts with serine/threonine-protein kinase PLK1; the interaction leads to phosphorylation of CEP68 and its subsequent degradation. Interacts with NEK2; the interaction leads to phosphorylation of CEP68. In terms of processing, phosphorylation by PLK1 is required for binding to BTRC in prometaphase. Phosphorylated directly or indirectly by NEK2. NEK2-mediated phosphorylation promotes CEP68 dissociation from the centrosome and its degradation at the onset of mitosis. Ubiquitinated and targeted for proteasomal degradation in early mitosis by the SCF(BTRC) and/or SCF(FBXW11) E3 ubiquitin-protein ligase complexes. Degradation is complete by prometaphase and is required for removal of CDK5RAP2 from the peripheral pericentriolar material and subsequent centriole separation.

The protein resides in the cytoplasm. The protein localises to the cytoskeleton. It is found in the microtubule organizing center. It localises to the centrosome. Functionally, involved in maintenance of centrosome cohesion, probably as part of a linker structure which prevents centrosome splitting. Required for localization of CDK5RAP2 to the centrosome during interphase. Contributes to CROCC/rootletin filament formation. This Mus musculus (Mouse) protein is Centrosomal protein of 68 kDa (Cep68).